Consider the following 205-residue polypeptide: Large ribosomal subunit protein uL4 (205 aa).

A disordered region spans residues 44 to 79 (RAGTKAQKTRREVSGSGAKPWRQKGTGRARAGSSRS).

Belongs to the universal ribosomal protein uL4 family. As to quaternary structure, part of the 50S ribosomal subunit.

Functionally, one of the primary rRNA binding proteins, this protein initially binds near the 5'-end of the 23S rRNA. It is important during the early stages of 50S assembly. It makes multiple contacts with different domains of the 23S rRNA in the assembled 50S subunit and ribosome. In terms of biological role, forms part of the polypeptide exit tunnel. This chain is Large ribosomal subunit protein uL4, found in Coxiella burnetii (strain Dugway 5J108-111).